The chain runs to 192 residues: MLSFLSSNLSSTRQSMAQVLNFALVLSTAFMLWKGLSVFTASSSPIVVVLSGSMEPAFQRGDLLFLWNRSPRAELGEIVVYNVRGKDIPIVHRVVRTFPQIEGKAKKVKEVNEASSVPPNMLLTKGDNNIADDTELYAKNQDFLHREEDIVGSVRGYMPMVGYVTIMLSEHPWLKTVLLGIMGLMVILQREQ.

The Cytoplasmic portion of the chain corresponds to 1–18 (MLSFLSSNLSSTRQSMAQ). Residues 19–39 (VLNFALVLSTAFMLWKGLSVF) form a helical; Signal-anchor for type II membrane protein membrane-spanning segment. The Lumenal segment spans residues 40 to 192 (TASSSPIVVV…GLMVILQREQ (153 aa)). Catalysis depends on charge relay system residues serine 53, histidine 92, and aspartate 133. The C-terminal short (CTS) helix stretch occupies residues 177–188 (VLLGIMGLMVIL).

The protein belongs to the peptidase S26B family. In terms of assembly, component of the signal peptidase complex (SPC) composed of a catalytic subunit SEC11 and three accessory subunits SPC1, SPC2 and SPC3. The complex induces a local thinning of the ER membrane which is used to measure the length of the signal peptide (SP) h-region of protein substrates. This ensures the selectivity of the complex towards h-regions shorter than 18-20 amino acids. SPC associates with the translocon complex.

Its subcellular location is the endoplasmic reticulum membrane. It catalyses the reaction Cleavage of hydrophobic, N-terminal signal or leader sequences from secreted and periplasmic proteins.. Its function is as follows. Catalytic component of the signal peptidase complex (SPC) which catalyzes the cleavage of N-terminal signal sequences from nascent proteins as they are translocated into the lumen of the endoplasmic reticulum. Specifically cleaves N-terminal signal peptides that contain a hydrophobic alpha-helix (h-region) shorter than 18-20 amino acids. This Aspergillus fumigatus (strain CBS 144.89 / FGSC A1163 / CEA10) (Neosartorya fumigata) protein is Signal peptidase complex catalytic subunit sec11 (sec11).